Here is a 690-residue protein sequence, read N- to C-terminus: Elongation factor G (690 aa).

The region spanning 8–283 is the tr-type G domain; it reads EYIRNIGICA…AVVGFLPSPI (276 aa). GTP is bound by residues 17-24, 81-85, and 135-138; these read AHIDAGKT, DTPGH, and NKMD.

This sequence belongs to the TRAFAC class translation factor GTPase superfamily. Classic translation factor GTPase family. EF-G/EF-2 subfamily.

The protein resides in the cytoplasm. Functionally, catalyzes the GTP-dependent ribosomal translocation step during translation elongation. During this step, the ribosome changes from the pre-translocational (PRE) to the post-translocational (POST) state as the newly formed A-site-bound peptidyl-tRNA and P-site-bound deacylated tRNA move to the P and E sites, respectively. Catalyzes the coordinated movement of the two tRNA molecules, the mRNA and conformational changes in the ribosome. In Rickettsia canadensis (strain McKiel), this protein is Elongation factor G.